Reading from the N-terminus, the 67-residue chain is DNA gyrase inhibitor YacG (67 aa).

Residues C9, C12, C28, and C32 each contribute to the Zn(2+) site. Residues 46-67 are disordered; it reads RIPSSGDLNDSDDWSEQPLDRQ.

The protein belongs to the DNA gyrase inhibitor YacG family. As to quaternary structure, interacts with GyrB. It depends on Zn(2+) as a cofactor.

Its function is as follows. Inhibits all the catalytic activities of DNA gyrase by preventing its interaction with DNA. Acts by binding directly to the C-terminal domain of GyrB, which probably disrupts DNA binding by the gyrase. The protein is DNA gyrase inhibitor YacG of Erwinia tasmaniensis (strain DSM 17950 / CFBP 7177 / CIP 109463 / NCPPB 4357 / Et1/99).